Consider the following 359-residue polypeptide: Probable mannitol dehydrogenase (359 aa).

Residues C50, H72, C103, C106, C109, C117, and C165 each contribute to the Zn(2+) site.

This sequence belongs to the zinc-containing alcohol dehydrogenase family. Requires Zn(2+) as cofactor.

It catalyses the reaction D-mannitol + NAD(+) = D-mannose + NADH + H(+). Functionally, oxidizes mannitol to mannose. Provides the initial step by which translocated mannitol is committed to central metabolism and, by regulating mannitol pool size, is important in regulating salt tolerance at the cellular level. The protein is Probable mannitol dehydrogenase (CAD1) of Medicago sativa (Alfalfa).